A 137-amino-acid chain; its full sequence is Putative pre-16S rRNA nuclease (137 aa).

Belongs to the YqgF nuclease family.

It is found in the cytoplasm. In terms of biological role, could be a nuclease involved in processing of the 5'-end of pre-16S rRNA. The chain is Putative pre-16S rRNA nuclease from Chromobacterium violaceum (strain ATCC 12472 / DSM 30191 / JCM 1249 / CCUG 213 / NBRC 12614 / NCIMB 9131 / NCTC 9757 / MK).